The chain runs to 397 residues: Elongation factor Tu (397 aa).

One can recognise a tr-type G domain in the interval Lys10–Glu206. A G1 region spans residues Gly19 to Thr26. Residue Gly19–Thr26 coordinates GTP. Thr26 provides a ligand contact to Mg(2+). The interval Gly61–Ser65 is G2. Residues Asp82–Gly85 are G3. GTP contacts are provided by residues Asp82–His86 and Asn137–Asp140. Positions Asn137–Asp140 are G4. The G5 stretch occupies residues Ser175–Leu177.

Belongs to the TRAFAC class translation factor GTPase superfamily. Classic translation factor GTPase family. EF-Tu/EF-1A subfamily. In terms of assembly, monomer.

It localises to the cytoplasm. The enzyme catalyses GTP + H2O = GDP + phosphate + H(+). Functionally, GTP hydrolase that promotes the GTP-dependent binding of aminoacyl-tRNA to the A-site of ribosomes during protein biosynthesis. In Lachnospira eligens (strain ATCC 27750 / DSM 3376 / VPI C15-48 / C15-B4) (Eubacterium eligens), this protein is Elongation factor Tu.